The following is a 351-amino-acid chain: MEIKDLQCNIFIPDPLSIKHMKIALVRDLTNNSFGRQATLLEKGLKELGHEVTSFEKNSIRKEDLPPGFDDYIYYTIFNTQLFWKGIPKHGKNIVFEVADTDAISSVALYFFRHQPVDKIIVPSQWSKNAFYTLKLPIPQPIYVIPHALNPSMFSYPPKEMPHPCVLAILPHSWDRKGGDIVVNVFRELMNSGYHFYPLILVSNMLEPRLRGLNAVKTPLPDPDYYSLFAGCDILFYPVRGGAFEIPVIEALALGLDVVVTEKGAWSEWILNNDDVYWIKVNKKVKLWYTNLFHVGYFLEPDYNDAYQKLVMALANWHPEKKKENLENRAILYRERYNYINIAKEWEKILA.

Belongs to the glycosyltransferase group 1 family.

The protein is Putative glycosyltransferase 45 (SIFV0045) of Sulfolobus islandicus filamentous virus (isolate Iceland/Hveragerdi) (SIFV).